A 513-amino-acid polypeptide reads, in one-letter code: Putative ribose/galactose/methyl galactoside import ATP-binding protein 2 (513 aa).

ABC transporter domains are found at residues 24-260 (LAAD…VGRE) and 270-510 (VPIG…VMDL). 56-63 (GENGAGKS) contributes to the ATP binding site.

This sequence belongs to the ABC transporter superfamily. Carbohydrate importer 2 (CUT2) (TC 3.A.1.2) family.

It is found in the cell inner membrane. It carries out the reaction D-ribose(out) + ATP + H2O = D-ribose(in) + ADP + phosphate + H(+). The enzyme catalyses D-galactose(out) + ATP + H2O = D-galactose(in) + ADP + phosphate + H(+). Functionally, part of an ABC transporter complex involved in carbohydrate import. Could be involved in ribose, galactose and/or methyl galactoside import. Responsible for energy coupling to the transport system. The sequence is that of Putative ribose/galactose/methyl galactoside import ATP-binding protein 2 from Agrobacterium fabrum (strain C58 / ATCC 33970) (Agrobacterium tumefaciens (strain C58)).